The sequence spans 214 residues: Adenylate kinase (214 aa).

10-15 (GAGKGT) serves as a coordination point for ATP. The segment at 30 to 59 (STGDMLRAAVKAGTPLGLEAKKVMDAGQLV) is NMP. AMP contacts are provided by residues Thr-31, Arg-36, 57 to 59 (QLV), 85 to 88 (GFPR), and Gln-92. The tract at residues 122–159 (GRRVHPGSGRVYHVVFNPPKVEGKDDVTGEDLVIRPDD) is LID. Residues Arg-123 and 132–133 (VY) each bind ATP. AMP-binding residues include Arg-156 and Arg-167. Residue Gln-200 coordinates ATP.

It belongs to the adenylate kinase family. As to quaternary structure, monomer.

It is found in the cytoplasm. The catalysed reaction is AMP + ATP = 2 ADP. The protein operates within purine metabolism; AMP biosynthesis via salvage pathway; AMP from ADP: step 1/1. In terms of biological role, catalyzes the reversible transfer of the terminal phosphate group between ATP and AMP. Plays an important role in cellular energy homeostasis and in adenine nucleotide metabolism. In Shewanella amazonensis (strain ATCC BAA-1098 / SB2B), this protein is Adenylate kinase.